The primary structure comprises 580 residues: Laccase-5 (580 aa).

The N-terminal stretch at 1-25 (MDVTKSLLCFISFVAFLLFSSVAEA) is a signal peptide. Plastocyanin-like domains lie at 34–150 (IIQA…PPAG) and 160–312 (RNVP…YKSA). A glycan (N-linked (GlcNAc...) asparagine) is linked at N80. Residues H84, H86, H129, and H131 each coordinate Cu cation. Residues N189, N300, N340, N392, N402, N410, and N443 are each glycosylated (N-linked (GlcNAc...) asparagine). Residues 428 to 564 (DFPAKPPVKF…AMAFLVENGN (137 aa)) enclose the Plastocyanin-like 3 domain. Cu cation-binding residues include H481, H484, H486, H543, C544, H545, and H549.

The protein belongs to the multicopper oxidase family. Cu cation is required as a cofactor. In terms of tissue distribution, ubiquitous and constitutive.

It localises to the secreted. The protein localises to the extracellular space. It is found in the apoplast. It catalyses the reaction 4 hydroquinone + O2 = 4 benzosemiquinone + 2 H2O. Lignin degradation and detoxification of lignin-derived products. This is Laccase-5 (LAC5) from Arabidopsis thaliana (Mouse-ear cress).